The sequence spans 198 residues: ATP-dependent Clp protease proteolytic subunit (198 aa).

Catalysis depends on serine 98, which acts as the Nucleophile. Histidine 123 is a catalytic residue.

The protein belongs to the peptidase S14 family. In terms of assembly, fourteen ClpP subunits assemble into 2 heptameric rings which stack back to back to give a disk-like structure with a central cavity, resembling the structure of eukaryotic proteasomes.

It is found in the cytoplasm. The enzyme catalyses Hydrolysis of proteins to small peptides in the presence of ATP and magnesium. alpha-casein is the usual test substrate. In the absence of ATP, only oligopeptides shorter than five residues are hydrolyzed (such as succinyl-Leu-Tyr-|-NHMec, and Leu-Tyr-Leu-|-Tyr-Trp, in which cleavage of the -Tyr-|-Leu- and -Tyr-|-Trp bonds also occurs).. Its function is as follows. Cleaves peptides in various proteins in a process that requires ATP hydrolysis. Has a chymotrypsin-like activity. Plays a major role in the degradation of misfolded proteins. The sequence is that of ATP-dependent Clp protease proteolytic subunit from Listeria innocua serovar 6a (strain ATCC BAA-680 / CLIP 11262).